Reading from the N-terminus, the 762-residue chain is Protein PHTF1 (762 aa).

The PHTF domain occupies 6–150 (RDAISWYQKK…VHCQIVSTQI (145 aa)). 3 consecutive transmembrane segments (helical) span residues 77–97 (GLVR…VTSL), 99–119 (IFVW…LYFM), and 121–141 (PIVN…MGTV). The tract at residues 152–188 (RPSGNNGNRRRRKLRKTVNGDGSRENGNNSSDKARGV) is disordered. N-linked (GlcNAc...) asparagine glycosylation is found at Asn-179, Asn-180, and Asn-197. Residues Ser-272, Ser-276, Ser-277, Ser-334, and Ser-336 each carry the phosphoserine modification. 2 disordered regions span residues 344-379 (SAAF…SETE) and 393-415 (RSSV…TKRD). Residues 348 to 361 (SQGSRSGMSGGSRS) are compositionally biased toward low complexity. Positions 365 to 376 (LRRDSESTRHDS) are enriched in basic and acidic residues. A glycan (N-linked (GlcNAc...) asparagine) is linked at Asn-431. 4 helical membrane-spanning segments follow: residues 473–493 (GVGY…FPFL), 512–532 (EILT…LSII), 611–631 (VVVS…CAQV), and 645–665 (WEFL…ASLG). Asn-674 and Asn-733 each carry an N-linked (GlcNAc...) asparagine glycan. Residues 737–757 (VVILSAVSGVISDLLGFNIRL) traverse the membrane as a helical segment.

In terms of assembly, interacts with FEM1B.

Its subcellular location is the endoplasmic reticulum membrane. The protein localises to the golgi apparatus. It localises to the cis-Golgi network membrane. This is Protein PHTF1 (PHTF1) from Bos taurus (Bovine).